A 1217-amino-acid chain; its full sequence is CST complex subunit CTC1 (1217 aa).

Positions 327–346 (LEADPKPLPTPSNSEDKKDP) are disordered.

It belongs to the CTC1 family. Component of the CST complex, composed of TEN1/C17orf106, CTC1/C17orf68 and STN1; in the complex interacts directly with STN1. Interacts with ACD and POT1.

Its subcellular location is the nucleus. It localises to the chromosome. It is found in the telomere. Component of the CST complex proposed to act as a specialized replication factor promoting DNA replication under conditions of replication stress or natural replication barriers such as the telomere duplex. The CST complex binds single-stranded DNA with high affinity in a sequence-independent manner, while isolated subunits bind DNA with low affinity by themselves. Initially the CST complex has been proposed to protect telomeres from DNA degradation. However, the CST complex has been shown to be involved in several aspects of telomere replication. The CST complex inhibits telomerase and is involved in telomere length homeostasis; it is proposed to bind to newly telomerase-synthesized 3' overhangs and to terminate telomerase action implicating the association with the ACD:POT1 complex thus interfering with its telomerase stimulation activity. The CST complex is also proposed to be involved in fill-in synthesis of the telomeric C-strand probably implicating recruitment and activation of DNA polymerase alpha. The CST complex facilitates recovery from many forms of exogenous DNA damage; seems to be involved in the re-initiation of DNA replication at repaired forks and/or dormant origins. Involved in telomere maintenance. Involved in genome stability. May be in involved in telomeric C-strand fill-in during late S/G2 phase. This is CST complex subunit CTC1 (CTC1) from Pongo abelii (Sumatran orangutan).